A 1534-amino-acid polypeptide reads, in one-letter code: DNA polymerase alpha catalytic subunit (1534 aa).

Positions 1–12 are enriched in low complexity; it reads MDEGSADAGASG. Disordered regions lie at residues 1–23, 96–141, and 864–905; these read MDEGSADAGASGRRSRARGSEAV, THRT…LSAA, and FNST…GPSY. Basic residues predominate over residues 116-125; that stretch reads RKRKQPRPQS. Over residues 127–141 the composition is skewed to low complexity; sequence RPPQQSAAAASLSAA. Composition is skewed to basic and acidic residues over residues 864-882 and 889-898; these read FNSTKRKMNPDTEAARPDE and DEGHHVDQGK. Cysteine 1340, cysteine 1343, cysteine 1383, cysteine 1386, cysteine 1422, cysteine 1427, cysteine 1448, and cysteine 1454 together coordinate Zn(2+). Residues 1340–1386 form a CysA-type zinc finger; the sequence is CPSCSTTFDCPPVSSLIIGSSSGNVSNPNEGNDASINFWRRMRCPRC. The CysB motif motif lies at 1422 to 1451; the sequence is CDDEGCKYSTHSVNLRVMGDSERGTICPNY.

The protein belongs to the DNA polymerase type-B family.

The protein resides in the nucleus. It carries out the reaction DNA(n) + a 2'-deoxyribonucleoside 5'-triphosphate = DNA(n+1) + diphosphate. Polymerase alpha in a complex with DNA primase is a replicative polymerase. This chain is DNA polymerase alpha catalytic subunit, found in Oryza sativa subsp. japonica (Rice).